The chain runs to 58 residues: Ikitoxin (58 aa).

Residues 3-58 form the LCN-type CS-alpha/beta domain; sequence VPGNYPLDKDGNTYKCFLLGENEECLNVCKLHGVQYGYCYASKCWCEYLEDDKDSV. 3 disulfides stabilise this stretch: Cys-18/Cys-41, Cys-27/Cys-46, and Cys-31/Cys-48.

As to expression, expressed by the venom gland.

Its subcellular location is the secreted. Beta toxins bind voltage-independently at site-4 of sodium channels (Nav) and shift the voltage of activation toward more negative potentials thereby affecting sodium channel activation and promoting spontaneous and repetitive firing. Does not produce effect when administered to blowfly and cabbage looper larvae. In mice, does not produce convulsions, tremors, increased ventilation nor death. In Parabuthus transvaalicus (Transvaal thick-tailed scorpion), this protein is Ikitoxin.